Reading from the N-terminus, the 1335-residue chain is Membrane-associated phosphatidylinositol transfer protein 2 (1335 aa).

Disordered stretches follow at residues 32 to 51 (ETHGQGSGVEILENRPYTDG) and 262 to 341 (EEGP…SEEE). Positions 275–286 (KDQASGTTSDPG) are enriched in polar residues. The span at 299–319 (KQWSTSSKSSRSSKRGASPSR) shows a compositional bias: low complexity. Phosphoserine occurs at positions 334, 338, 365, and 586. Positions 606-657 (HCSGGSGGGGSGGSSLESSRHLSRSNIDIPRSNGTEDSRRQLPRKRSDSSTY) are disordered. The segment covering 609–618 (GGSGGGGSGG) has biased composition (gly residues). A Phosphoserine modification is found at Ser-630. The segment covering 639–653 (GTEDSRRQLPRKRSD) has biased composition (basic and acidic residues). A phosphoserine mark is found at Ser-686, Ser-687, and Ser-688. One can recognise a DDHD domain in the interval 701-949 (FDFEIADLFL…VSFLLRQVMR (249 aa)). Arg-814 carries the omega-N-methylarginine modification. The interval 861–880 (ALPPPSPTTQGPRARARQVS) is disordered. At Ser-1263 the chain carries Phosphoserine. Residues 1282-1313 (TISAQPSGPSHRHDRTQTQMDSEQRGQRSMSV) form a disordered region. The segment covering 1298 to 1313 (QTQMDSEQRGQRSMSV) has biased composition (polar residues).

The protein belongs to the PtdIns transfer protein family. PI transfer class IIA subfamily. In terms of assembly, interacts with CPNE4 (via VWFA domain). Interacts with PTK2B via its C-terminus. As to expression, detected in retina and in the dentate gyrus of the cerebellum.

The protein localises to the endomembrane system. It localises to the cytoplasm. It is found in the cytoskeleton. Catalyzes the transfer of phosphatidylinositol and phosphatidylcholine between membranes (in vitro). Binds calcium ions. This is Membrane-associated phosphatidylinositol transfer protein 2 (Pitpnm2) from Mus musculus (Mouse).